Here is a 195-residue protein sequence, read N- to C-terminus: uncharacterized protein (195 aa).

The 132-residue stretch at 34–165 (SHHAAVLIPI…WLDIHRGGVN (132 aa)) folds into the Nudix hydrolase domain. The Nudix box motif lies at 72–94 (GKADPQDSSLIETALREAEEEVA). Mg(2+)-binding residues include glutamate 88 and glutamate 92.

This sequence belongs to the Nudix hydrolase family. PCD1 subfamily. Mn(2+) serves as cofactor. It depends on Mg(2+) as a cofactor.

In terms of biological role, probably mediates the hydrolysis of some nucleoside diphosphate derivatives. This is an uncharacterized protein from Yersinia enterocolitica serotype O:8 / biotype 1B (strain NCTC 13174 / 8081).